The sequence spans 546 residues: Glucose-6-phosphate isomerase (546 aa).

Glu-353 serves as the catalytic Proton donor. Residues His-384 and Lys-512 contribute to the active site.

This sequence belongs to the GPI family.

It is found in the cytoplasm. The catalysed reaction is alpha-D-glucose 6-phosphate = beta-D-fructose 6-phosphate. Its pathway is carbohydrate biosynthesis; gluconeogenesis. The protein operates within carbohydrate degradation; glycolysis; D-glyceraldehyde 3-phosphate and glycerone phosphate from D-glucose: step 2/4. In terms of biological role, catalyzes the reversible isomerization of glucose-6-phosphate to fructose-6-phosphate. The protein is Glucose-6-phosphate isomerase of Methylococcus capsulatus (strain ATCC 33009 / NCIMB 11132 / Bath).